The sequence spans 117 residues: Small nuclear ribonucleoprotein Sm D1 (117 aa).

The Sm domain occupies 2-74 (KLVRFLMKLT…IRYYILPDSL (73 aa)). The interval 81 to 117 (IDDSTKPKQKKKEVVRGRGRGRGRGTRGRGRGASRGF) is disordered. A compositionally biased stretch (basic residues) spans 87–117 (PKQKKKEVVRGRGRGRGRGTRGRGRGASRGF).

This sequence belongs to the snRNP core protein family. As to quaternary structure, belongs to the 40S cdc5-associated complex (or cwf complex), a spliceosome sub-complex reminiscent of a late-stage spliceosome composed of the U2, U5 and U6 snRNAs and at least brr2, cdc5, cwf2/prp3, cwf3/syf1, cwf4/syf3, cwf5/ecm2, spp42/cwf6, cwf7/spf27, cwf8, cwf9, cwf10, cwf11, cwf12, prp45/cwf13, cwf14, cwf15, cwf16, cwf17, cwf18, cwf19, cwf20, cwf21, cwf22, cwf23, cwf24, cwf25, cwf26, cyp7/cwf27, cwf28, cwf29/ist3, lea1, msl1, prp5/cwf1, prp10, prp12/sap130, prp17, prp22, sap61, sap62, sap114, sap145, slu7, smb1, smd1, smd3, smf1, smg1 and syf2. Interacts with saf5; the interaction is direct.

The protein localises to the nucleus. It localises to the cytoplasm. In terms of biological role, plays a role in pre-mRNA splicing as a core component of the spliceosomal U1, U2, U4 and U5 small nuclear ribonucleoproteins (snRNPs), the building blocks of the spliceosome. The polypeptide is Small nuclear ribonucleoprotein Sm D1 (smd1) (Schizosaccharomyces pombe (strain 972 / ATCC 24843) (Fission yeast)).